Reading from the N-terminus, the 555-residue chain is Glutamate--tRNA ligase (555 aa).

The 'HIGH' region signature appears at 100 to 110; the sequence is PNPSGPLHIGH.

Belongs to the class-I aminoacyl-tRNA synthetase family. Glutamate--tRNA ligase type 2 subfamily.

The protein localises to the cytoplasm. It catalyses the reaction tRNA(Glu) + L-glutamate + ATP = L-glutamyl-tRNA(Glu) + AMP + diphosphate. In terms of biological role, catalyzes the attachment of glutamate to tRNA(Glu) in a two-step reaction: glutamate is first activated by ATP to form Glu-AMP and then transferred to the acceptor end of tRNA(Glu). In Methanococcus maripaludis (strain C6 / ATCC BAA-1332), this protein is Glutamate--tRNA ligase.